The following is a 941-amino-acid chain: Pre-mRNA-processing factor 6 (941 aa).

The segment at 1 to 79 (MNKKKKPFLG…DEDLNDTNYD (79 aa)) is disordered. A compositionally biased stretch (basic and acidic residues) spans 39–65 (DANDPVDDRHAPPGKRTVGDQMKKNQA). Acidic residues predominate over residues 66-78 (ADDDDEDLNDTNY). Phosphoserine is present on serine 143. Threonine 180, threonine 266, and threonine 275 each carry phosphothreonine. Serine 279 is subject to Phosphoserine. HAT repeat units lie at residues 384 to 416 (TDIR…LEEP), 418 to 444 (DARI…ARLE), 445 to 476 (TYEN…LEEA), 554 to 586 (NALE…FEKN), 588 to 620 (GTRE…SKWL), 622 to 654 (GDVP…LESE), 689 to 721 (DNIR…IEEQ), 723 to 755 (EMME…LEEK), and 855 to 887 (RKIT…FELQ).

In terms of assembly, identified in the spliceosome B complex. Identified in the spliceosome C complex. Associates with the U5 snRNP particle. Component of the U4/U6-U5 tri-snRNP complex composed of the U4, U6 and U5 snRNAs and at least PRPF3, PRPF4, PRPF6, PRPF8, PRPF31, SNRNP200, TXNL4A, SNRNP40, DDX23, CD2BP2, PPIH, SNU13, EFTUD2, SART1 and USP39, LSm proteins LSm2-8 and Sm proteins. Interacts with ARAF. Interacts with AR and NR3C1, but not ESR1, independently of the presence of hormones. Interacts with USH1G. Phosphorylated by PRP4K during spliceosome assembly. Widely expressed.

The protein localises to the nucleus. It is found in the nucleoplasm. The protein resides in the nucleus speckle. Involved in pre-mRNA splicing as component of the U4/U6-U5 tri-snRNP complex, one of the building blocks of the spliceosome. Enhances dihydrotestosterone-induced transactivation activity of AR, as well as dexamethasone-induced transactivation activity of NR3C1, but does not affect estrogen-induced transactivation. The chain is Pre-mRNA-processing factor 6 from Homo sapiens (Human).